Consider the following 347-residue polypeptide: UDP-N-acetylenolpyruvoylglucosamine reductase (347 aa).

An FAD-binding PCMH-type domain is found at 23-197 (LPARAARLLR…LRVRFRLPQA (175 aa)). The active site involves arginine 174. Catalysis depends on serine 247, which acts as the Proton donor. Glutamate 343 is a catalytic residue.

This sequence belongs to the MurB family. Requires FAD as cofactor.

Its subcellular location is the cytoplasm. It carries out the reaction UDP-N-acetyl-alpha-D-muramate + NADP(+) = UDP-N-acetyl-3-O-(1-carboxyvinyl)-alpha-D-glucosamine + NADPH + H(+). Its pathway is cell wall biogenesis; peptidoglycan biosynthesis. Its function is as follows. Cell wall formation. This is UDP-N-acetylenolpyruvoylglucosamine reductase from Azoarcus sp. (strain BH72).